The chain runs to 808 residues: Protein SEY1 (808 aa).

Residues 1 to 21 form a disordered region; it reads MSSELSEGELSHTSSSSSFVP. Over 1 to 701 the chain is Cytoplasmic; that stretch reads MSSELSEGEL…KRSIVQHITQ (701 aa). One can recognise a GB1/RHD3-type G domain in the interval 57–286; the sequence is GNNYHIISVF…VGDELFKPEY (230 aa). 67-74 serves as a coordination point for GTP; it reads GSQSTGKS. The helical transmembrane segment at 702-722 threads the bilayer; the sequence is IPYYIYLVIVFLGWNEFMAII. The Lumenal portion of the chain corresponds to 723–725; sequence RNP. Residues 726–746 traverse the membrane as a helical segment; sequence LLFSLALLLGASVYILYKLNL. Topologically, residues 747-808 are cytoplasmic; it reads LKPAIVVAQR…YSDNIELDDM (62 aa).

Belongs to the TRAFAC class dynamin-like GTPase superfamily. GB1/RHD3 GTPase family. RHD3 subfamily.

The protein resides in the endoplasmic reticulum membrane. Cooperates with the reticulon proteins and tubule-shaping DP1 family proteins to generate and maintain the structure of the tubular endoplasmic reticulum network. Has GTPase activity, which is required for its function in ER organization. In Candida tropicalis (strain ATCC MYA-3404 / T1) (Yeast), this protein is Protein SEY1.